The sequence spans 301 residues: Glycine--tRNA ligase alpha subunit (301 aa).

It belongs to the class-II aminoacyl-tRNA synthetase family. In terms of assembly, tetramer of two alpha and two beta subunits.

It is found in the cytoplasm. The catalysed reaction is tRNA(Gly) + glycine + ATP = glycyl-tRNA(Gly) + AMP + diphosphate. In Shewanella denitrificans (strain OS217 / ATCC BAA-1090 / DSM 15013), this protein is Glycine--tRNA ligase alpha subunit.